Reading from the N-terminus, the 457-residue chain is Heme sensor protein HssS (457 aa).

A run of 2 helical transmembrane segments spans residues 9–29 (IAIY…VLTN) and 164–184 (TFLA…VIAS). The region spanning 186–238 (YSIIRPVKKLKLATERLIDGDFETPIKQTRKDEIGTLQYHFNKMRESLGQVDQ) is the HAMP domain. The Histidine kinase domain occupies 246–456 (NVSHEIKTPL…TFTITLPNNS (211 aa)). Phosphohistidine; by autocatalysis is present on H249.

In terms of processing, autophosphorylated.

The protein localises to the cell membrane. The enzyme catalyses ATP + protein L-histidine = ADP + protein N-phospho-L-histidine.. Functionally, member of the two-component regulatory system HssS/HssR involved in intracellular heme homeostasis and tempering of staphylococcal virulence. HssS functions as a heme sensor histidine kinase which is autophosphorylated at a histidine residue and transfers its phosphate group to an aspartate residue of HssR. HssR/HssS activates the expression of hrtAB, an efflux pump, in response to extracellular heme, hemin, hemoglobin or blood. The polypeptide is Heme sensor protein HssS (hssS) (Staphylococcus aureus (strain USA300)).